Consider the following 200-residue polypeptide: NADH-quinone oxidoreductase subunit C (200 aa).

This sequence belongs to the complex I 30 kDa subunit family. As to quaternary structure, NDH-1 is composed of 14 different subunits. Subunits NuoB, C, D, E, F, and G constitute the peripheral sector of the complex.

The protein resides in the cell inner membrane. It catalyses the reaction a quinone + NADH + 5 H(+)(in) = a quinol + NAD(+) + 4 H(+)(out). Functionally, NDH-1 shuttles electrons from NADH, via FMN and iron-sulfur (Fe-S) centers, to quinones in the respiratory chain. The immediate electron acceptor for the enzyme in this species is believed to be ubiquinone. Couples the redox reaction to proton translocation (for every two electrons transferred, four hydrogen ions are translocated across the cytoplasmic membrane), and thus conserves the redox energy in a proton gradient. The polypeptide is NADH-quinone oxidoreductase subunit C (Thiobacillus denitrificans (strain ATCC 25259 / T1)).